A 304-amino-acid polypeptide reads, in one-letter code: MWFKNLTLYRFNKPFAVETEALETALADFTFSPCSSQDVSKFGFSNALGKKGSSLVHSADNRHLICVTKEEKILPGQVIKEALEEKVALIEDEENRKMAKKEKDALKDEIITSLLPRAFSRRSQTHALILPELEMILVDSSSATKTEELLALLRKALGSLPVIPLSFKAPVESNLTEWLKLGSAPLPFEMQDEAELKSEADEGGIVRFKQQDLKEDEVLAHLATGKQVHKLALHFGQSIALLLQSDASVKRLKFSEEFRAGNDEVGTDDPMARLDADFALMGSELVALMHALVAALGGLEEAQV.

Belongs to the RdgC family.

The protein localises to the cytoplasm. It is found in the nucleoid. In terms of biological role, may be involved in recombination. The sequence is that of Recombination-associated protein RdgC from Shewanella baltica (strain OS195).